Consider the following 432-residue polypeptide: Trigger factor (432 aa).

Residues E161–P246 form the PPIase FKBP-type domain.

Belongs to the FKBP-type PPIase family. Tig subfamily.

It localises to the cytoplasm. It catalyses the reaction [protein]-peptidylproline (omega=180) = [protein]-peptidylproline (omega=0). Its function is as follows. Involved in protein export. Acts as a chaperone by maintaining the newly synthesized protein in an open conformation. Functions as a peptidyl-prolyl cis-trans isomerase. This is Trigger factor from Salmonella arizonae (strain ATCC BAA-731 / CDC346-86 / RSK2980).